The following is a 427-amino-acid chain: Peptidase B (427 aa).

Mn(2+) contacts are provided by Lys195 and Asp200. The active site involves Lys207. Residues Asp218, Asp277, and Glu279 each contribute to the Mn(2+) site. Arg281 is a catalytic residue.

Belongs to the peptidase M17 family. In terms of assembly, homohexamer. The cofactor is Mn(2+).

The protein localises to the cytoplasm. It carries out the reaction Release of an N-terminal amino acid, Xaa, from a peptide or arylamide. Xaa is preferably Glu or Asp but may be other amino acids, including Leu, Met, His, Cys and Gln.. Its function is as follows. Probably plays an important role in intracellular peptide degradation. The chain is Peptidase B from Shigella boydii serotype 18 (strain CDC 3083-94 / BS512).